A 325-amino-acid polypeptide reads, in one-letter code: Holliday junction branch migration complex subunit RuvB (325 aa).

The interval 1-172 (MENNELLDIT…FGVVFRLEFY (172 aa)) is large ATPase domain (RuvB-L). Residues L11, R12, G53, K56, T57, T58, 119–121 (EDF), R162, Y172, and R209 each bind ATP. Position 57 (T57) interacts with Mg(2+). The small ATPAse domain (RuvB-S) stretch occupies residues 173–243 (NSEELKEIVK…IAQEALIAMD (71 aa)). Residues 246–325 (DYGLDDMDRK…LKRKIPERLF (80 aa)) form a head domain (RuvB-H) region. Residues R301 and R306 each coordinate DNA.

The protein belongs to the RuvB family. Homohexamer. Forms an RuvA(8)-RuvB(12)-Holliday junction (HJ) complex. HJ DNA is sandwiched between 2 RuvA tetramers; dsDNA enters through RuvA and exits via RuvB. An RuvB hexamer assembles on each DNA strand where it exits the tetramer. Each RuvB hexamer is contacted by two RuvA subunits (via domain III) on 2 adjacent RuvB subunits; this complex drives branch migration. In the full resolvosome a probable DNA-RuvA(4)-RuvB(12)-RuvC(2) complex forms which resolves the HJ.

The protein localises to the cytoplasm. It catalyses the reaction ATP + H2O = ADP + phosphate + H(+). Its function is as follows. The RuvA-RuvB-RuvC complex processes Holliday junction (HJ) DNA during genetic recombination and DNA repair, while the RuvA-RuvB complex plays an important role in the rescue of blocked DNA replication forks via replication fork reversal (RFR). RuvA specifically binds to HJ cruciform DNA, conferring on it an open structure. The RuvB hexamer acts as an ATP-dependent pump, pulling dsDNA into and through the RuvAB complex. RuvB forms 2 homohexamers on either side of HJ DNA bound by 1 or 2 RuvA tetramers; 4 subunits per hexamer contact DNA at a time. Coordinated motions by a converter formed by DNA-disengaged RuvB subunits stimulates ATP hydrolysis and nucleotide exchange. Immobilization of the converter enables RuvB to convert the ATP-contained energy into a lever motion, pulling 2 nucleotides of DNA out of the RuvA tetramer per ATP hydrolyzed, thus driving DNA branch migration. The RuvB motors rotate together with the DNA substrate, which together with the progressing nucleotide cycle form the mechanistic basis for DNA recombination by continuous HJ branch migration. Branch migration allows RuvC to scan DNA until it finds its consensus sequence, where it cleaves and resolves cruciform DNA. This Thermodesulfovibrio yellowstonii (strain ATCC 51303 / DSM 11347 / YP87) protein is Holliday junction branch migration complex subunit RuvB.